Consider the following 611-residue polypeptide: E-selectin (611 aa).

The first 22 residues, 1-22 (MITSQLLPALTLVLLLFKEGGA), serve as a signal peptide directing secretion. A C-type lectin domain is found at 23-140 (WSYNASTEAM…CDKKKLALCY (118 aa)). The Extracellular segment spans residues 23 to 557 (WSYNASTEAM…CEAPTESSIP (535 aa)). Asn-26 is a glycosylation site (N-linked (GlcNAc...) asparagine). 19 disulfides stabilise this stretch: Cys-41/Cys-139, Cys-112/Cys-131, Cys-144/Cys-155, Cys-149/Cys-164, Cys-166/Cys-175, Cys-181/Cys-225, Cys-194/Cys-207, Cys-211/Cys-238, Cys-243/Cys-287, Cys-256/Cys-269, Cys-273/Cys-300, Cys-305/Cys-350, Cys-336/Cys-363, Cys-368/Cys-413, Cys-399/Cys-426, Cys-431/Cys-476, Cys-462/Cys-489, Cys-494/Cys-535, and Cys-521/Cys-548. Ca(2+) contacts are provided by Glu-102, Asn-104, and Glu-110. Residues 102–110 (EPNNKQNDE), 114–119 (EIYIKR), and 127–129 (NDE) contribute to the a carbohydrate site. Residues Asn-127 and Asp-128 each coordinate Ca(2+). Residues 141-176 (TAACTPTSCSGHGECVETVNNYTCKCHPGFRGLRCE) enclose the EGF-like domain. A glycan (N-linked (GlcNAc...) asparagine) is linked at Asn-161. Sushi domains are found at residues 179–240 (VTCQ…ACNV) and 241–302 (VECS…TCKA). N-linked (GlcNAc...) asparagine glycosylation is present at Asn-204. Residue Asn-266 is glycosylated (N-linked (GlcNAc...) asparagine). 2 N-linked (GlcNAc...) asparagine glycosylation sites follow: Asn-313 and Asn-333. 4 Sushi domains span residues 316-365 (VSCS…VCKA), 367-428 (QCKA…TCEA), 430-491 (KCDA…SCQV), and 492-550 (VQCF…TCEA). Asn-528 carries N-linked (GlcNAc...) asparagine glycosylation. Residues 558–579 (LAVGLTAGGTSLLTVASFLLWL) traverse the membrane as a helical segment. The Cytoplasmic portion of the chain corresponds to 580–611 (LKRLRKRAKKFVPASSCQSLQSDGSYHMPCSI).

This sequence belongs to the selectin/LECAM family. In terms of assembly, interacts with SELPLG/PSGL1 and PODXL2 through the sialyl Lewis X epitope. SELPLG sulfation appears not to be required for this interaction.

It localises to the cell membrane. Functionally, cell-surface glycoprotein having a role in immunoadhesion. Mediates in the adhesion of blood neutrophils in cytokine-activated endothelium through interaction with SELPLG/PSGL1. May have a role in capillary morphogenesis. The sequence is that of E-selectin (SELE) from Canis lupus familiaris (Dog).